The primary structure comprises 570 residues: Probable metalloreductase AIM14 (570 aa).

The next 7 membrane-spanning stretches (helical) occupy residues 21-41 (IKYG…LALL), 70-90 (AIHL…HYSL), 101-118 (LGRL…LTLR), 142-162 (IITV…AIDD), 177-197 (FVGF…IGPM), 204-224 (LFYI…PIHS), and 230-250 (FPFL…RIVF). The Ferric oxidoreductase domain maps to 101-219 (LGRLSYALIP…NLVNVAFILL (119 aa)). Residues 250–388 (FAKSLMILNK…GGSGISFALP (139 aa)) enclose the FAD-binding FR-type domain. Residues 481 to 505 (SNFNSENADSNDNTPETSHSPTKEN) show a composition bias toward polar residues. The disordered stretch occupies residues 481-507 (SNFNSENADSNDNTPETSHSPTKENGS).

Belongs to the ferric reductase (FRE) family. AIM14 subfamily. As to quaternary structure, interacts with ribosomes.

It is found in the membrane. Probable cell surface metalloreductase. May be involved in iron or copper homeostasis. The protein is Probable metalloreductase AIM14 (AIM14) of Saccharomyces cerevisiae (strain YJM789) (Baker's yeast).